Here is a 104-residue protein sequence, read N- to C-terminus: Putative ankyrin repeat protein L677 (104 aa).

ANK repeat units follow at residues 16–43 (FNKS…NPNL), 44–73 (DISH…SNSV), and 75–102 (LEAY…NKSI).

The polypeptide is Putative ankyrin repeat protein L677 (Acanthamoeba polyphaga (Amoeba)).